A 734-amino-acid polypeptide reads, in one-letter code: MALRFPRFSQGLAQDPTTRRIWFGIATAHDFESHDDITEERLYQNIFASHFGQLAIIFLWTSGNLFHVAWQGNFETWVQDPLHVRPIAHAIWDPHFGQPAVEAFTRGGALGPVNIAYSGVYQWWYTIGLRTNEDLYIGALFLLFLSAVSLLGGWLHLQPKWKPSVSWFKNAESRLNHHLSGLFGVSSLAWTGHLVHVAIPGSRGESVRWNNFLDVLPHPQGLGPLFTGQWNLYAQNPDSSSHLFGTSQGAGTAILTLLGGFHPQTQSLWLTDMAHHHLAIAFLFLIAGHMYRTNFGIGHSIKDLLEAHIPPGGRLGRGHKGLYDTINNSLHFQLGLALASLGVITSLVAQHMYSLPAYAFIAQDFTTQAALYTHHQYIAGFIMTGAFAHGAIFFIRDYNPEQNEDNVLARMLDHKEAIISHLSWASLFLGFHTLGLYVHNDVMLAFGTPEKQILIEPIFAQWIQSAHGKTSYGFDVLLSSTNSPAFNAGRSIWLPGWLNAINENSNSLFLTIGPGDFLVHHAIALGLHTTTLILVKGALDARGSKLMPDKKDFGYSFPCDGPGRGGTCDISAWDAFYLAVFWMLNTIGWVTFYWHWKHITLWQGNVSQFNESSTYLMGWLRDYLWLNSSQLINGYNPFGMNSLSVWAWMFLFGHLVWATGFMFLISWRGYWQELIETLAWAHERTPLANLIRWRDKPVALSIVQARLVGLAHFSVGYIFTYAAFLIASTSGKFG.

8 consecutive transmembrane segments (helical) span residues 46–69 (IFAS…FHVA), 135–158 (LYIG…LHLQ), 175–199 (LNHH…HVAI), 273–291 (MAHH…GHMY), 330–353 (LHFQ…QHMY), 369–395 (AALY…IFFI), 417–439 (AIIS…LYVH), and 517–535 (FLVH…LILV). The [4Fe-4S] cluster site is built by cysteine 559 and cysteine 568. 2 consecutive transmembrane segments (helical) span residues 575–596 (AFYL…YWHW) and 643–665 (LSVW…MFLI). Chlorophyll a contacts are provided by histidine 654, methionine 662, and tyrosine 670. Position 671 (tryptophan 671) interacts with phylloquinone. Residues 707–727 (LVGLAHFSVGYIFTYAAFLIA) form a helical membrane-spanning segment.

The protein belongs to the PsaA/PsaB family. The PsaA/B heterodimer binds the P700 chlorophyll special pair and subsequent electron acceptors. PSI consists of a core antenna complex that captures photons, and an electron transfer chain that converts photonic excitation into a charge separation. The eukaryotic PSI reaction center is composed of at least 11 subunits. The cofactor is P700 is a chlorophyll a/chlorophyll a' dimer, A0 is one or more chlorophyll a, A1 is one or both phylloquinones and FX is a shared 4Fe-4S iron-sulfur center..

Its subcellular location is the plastid. It is found in the chloroplast thylakoid membrane. It catalyses the reaction reduced [plastocyanin] + hnu + oxidized [2Fe-2S]-[ferredoxin] = oxidized [plastocyanin] + reduced [2Fe-2S]-[ferredoxin]. PsaA and PsaB bind P700, the primary electron donor of photosystem I (PSI), as well as the electron acceptors A0, A1 and FX. PSI is a plastocyanin-ferredoxin oxidoreductase, converting photonic excitation into a charge separation, which transfers an electron from the donor P700 chlorophyll pair to the spectroscopically characterized acceptors A0, A1, FX, FA and FB in turn. Oxidized P700 is reduced on the lumenal side of the thylakoid membrane by plastocyanin. In Populus alba (White poplar), this protein is Photosystem I P700 chlorophyll a apoprotein A2.